A 768-amino-acid polypeptide reads, in one-letter code: Translation factor GUF1 homolog, mitochondrial (768 aa).

Residues 1 to 29 (MRLWNRFSRLGNLLCACAACGCSFTPWRC) constitute a mitochondrion transit peptide. One can recognise a tr-type G domain in the interval 110–293 (SNIRNVAVVA…AIIERVPSPS (184 aa)). Residues 119–126 (AHVDHGKT), 184–188 (DTPGH), and 238–241 (TKMD) contribute to the GTP site.

The protein belongs to the TRAFAC class translation factor GTPase superfamily. Classic translation factor GTPase family. LepA subfamily.

It localises to the mitochondrion inner membrane. The catalysed reaction is GTP + H2O = GDP + phosphate + H(+). Functionally, promotes mitochondrial protein synthesis. May act as a fidelity factor of the translation reaction, by catalyzing a one-codon backward translocation of tRNAs on improperly translocated ribosomes. Binds to mitochondrial ribosomes in a GTP-dependent manner. This chain is Translation factor GUF1 homolog, mitochondrial, found in Trypanosoma brucei brucei (strain 927/4 GUTat10.1).